The following is a 579-amino-acid chain: SLAIN motif-containing protein 1 (579 aa).

6 disordered regions span residues 1 to 21 (MMAE…GPGP), 60 to 95 (LLLQ…GPGA), 135 to 162 (GGGG…PPTL), 233 to 258 (YTSR…LEDD), 289 to 313 (STSA…TCSD), and 347 to 454 (IPHS…PGQI). Residues 9–21 (ASPVAASGAGPGP) show a composition bias toward low complexity. The stretch at 21–56 (PVVNAELEVKKLQELVRKLEKQNEQLRSRAASAAAA) forms a coiled coil. A compositionally biased stretch (pro residues) spans 63–73 (QPPPPSAPPPA). Residues 141–154 (EPGTAGTPPGEAAT) are compositionally biased toward low complexity. Residues 233 to 243 (YTSRGSPLSPQ) show a composition bias toward polar residues. A Phosphoserine modification is found at serine 241. Composition is skewed to low complexity over residues 244-253 (SSIDSELSTS) and 289-305 (STSA…SLSS). The segment covering 362 to 373 (SPSTQYFPSNNF) has biased composition (polar residues). Positions 374–390 (QQPQYYPPQAQTADQQP) are enriched in low complexity. Residues 412-432 (AAASSNLSSPVTVRSSQSFDS) are compositionally biased toward polar residues. Arginine 469 carries the post-translational modification Asymmetric dimethylarginine. The tract at residues 479 to 516 (SPTVQGSSSSGSSGSSGGSGSGMPLSNGTQLYSTTGIP) is disordered. Over residues 502–516 (PLSNGTQLYSTTGIP) the composition is skewed to polar residues. Position 554 is an asymmetric dimethylarginine (arginine 554).

This sequence belongs to the SLAIN motif-containing family. As to quaternary structure, interacts with MAPRE1, MAPRE2, MAPRE3 and CKAP5. Interacts with ZDHHC17 (via ANK repeats). As to expression, expressed in embryonic stem cells. Expressed in adult bone marrow, brain, kidney, lung, testis and thymus. Expressed in colon. Isoform 1 is highly expressed in brain. Isoform 2 is more widely expressed in bone marrow, brain, colon, kidney, lung and thymus.

The protein localises to the cytoplasm. The protein resides in the cytoskeleton. In terms of biological role, microtubule plus-end tracking protein that might be involved in the regulation of cytoplasmic microtubule dynamics, microtubule organization and microtubule elongation. The chain is SLAIN motif-containing protein 1 (Slain1) from Mus musculus (Mouse).